Reading from the N-terminus, the 145-residue chain is 3-hydroxyacyl-[acyl-carrier-protein] dehydratase FabZ (145 aa).

Residue His-48 is part of the active site.

The protein belongs to the thioester dehydratase family. FabZ subfamily.

The protein resides in the cytoplasm. It catalyses the reaction a (3R)-hydroxyacyl-[ACP] = a (2E)-enoyl-[ACP] + H2O. Its function is as follows. Involved in unsaturated fatty acids biosynthesis. Catalyzes the dehydration of short chain beta-hydroxyacyl-ACPs and long chain saturated and unsaturated beta-hydroxyacyl-ACPs. The protein is 3-hydroxyacyl-[acyl-carrier-protein] dehydratase FabZ of Cellvibrio japonicus (strain Ueda107) (Pseudomonas fluorescens subsp. cellulosa).